The primary structure comprises 181 residues: Ribosome maturation factor RimM (181 aa).

A PRC barrel domain is found at 98–177 (EGEFFYCDLV…KITTHNAKTL (80 aa)).

This sequence belongs to the RimM family. In terms of assembly, binds ribosomal protein uS19.

Its subcellular location is the cytoplasm. Functionally, an accessory protein needed during the final step in the assembly of 30S ribosomal subunit, possibly for assembly of the head region. Essential for efficient processing of 16S rRNA. May be needed both before and after RbfA during the maturation of 16S rRNA. It has affinity for free ribosomal 30S subunits but not for 70S ribosomes. In Helicobacter pylori (strain HPAG1), this protein is Ribosome maturation factor RimM.